The chain runs to 520 residues: Calcium and calcium/calmodulin-dependent serine/threonine-protein kinase (520 aa).

Positions 13–302 (YEVVDVLGKG…ANDLLKHPWV (290 aa)) constitute a Protein kinase domain. Residues 19–27 (LGKGGFSVV) and K44 contribute to the ATP site. Catalysis depends on D167, which acts as the Proton acceptor. The helical transmembrane segment at 227 to 243 (MWSLGVILYILLSGCPP) threads the bilayer. Residue T267 is modified to Phosphothreonine; by autocatalysis. Positions 325-338 (ARRKLRAAAIASVL) are calmodulin-binding. Positions 346-368 (TKKLKNLLGSHDMKSEELENLRA) form a coiled coil. 4 consecutive EF-hand domains span residues 361–395 (EELE…MKMN), 396–431 (SLIP…LRNS), 432–467 (QGDD…LPED), and 474–509 (TEPG…DSSL). Ca(2+) is bound by residues D409, N411, D413, T415, E420, D445, D447, S449, C451, E456, D487, N489, D491, and E498.

Belongs to the protein kinase superfamily. CAMK Ser/Thr protein kinase family. CaMK subfamily. In terms of processing, autophosphorylation stimulated by calcium and inhibited by calcium/calmodulin. Occurs probably by an intermolecular mechanism.

The protein localises to the membrane. It carries out the reaction L-seryl-[protein] + ATP = O-phospho-L-seryl-[protein] + ADP + H(+). It catalyses the reaction L-threonyl-[protein] + ATP = O-phospho-L-threonyl-[protein] + ADP + H(+). Its activity is regulated as follows. Activated by calcium/calmodulin binding after calcium-induced autophosphorylation. Autophosphorylation is associated with a time-dependent loss of kinase activity sensitive to reaction pH and ATP concentration. In vitro inactivation leads to the formation of network-like structures. In terms of biological role, protein kinase that may be involved in microsporogenesis. The sequence is that of Calcium and calcium/calmodulin-dependent serine/threonine-protein kinase (CCAMK) from Lilium longiflorum (Trumpet lily).